The sequence spans 280 residues: Para-Rep C2 (280 aa).

In terms of domain architecture, CRESS-DNA virus Rep endonuclease spans 1-97; it reads MARRYCFTLN…ETLISEIGIP (97 aa). The short motif at 6–9 is the RCR-1 element; the sequence is CFTL. The a divalent metal cation site is built by E37 and H45. The short motif at 45–47 is the RCR-2 element; the sequence is HLQ. The Nuclear localization signal motif lies at 54-75; the sequence is NKIRLGGLKKKFGNRAHWEIAR. The For DNA cleavage activity role is filled by Y84. An RCR-3 motif is present at residues 84-87; it reads YCCK. The short motif at 97 to 103 is the Nuclear localization signal element; it reads PVMKGSN. 172 to 180 is an ATP binding site; sequence GSDGGEGKT.

The protein belongs to the nanoviridea/circoviridae replication-associated protein family. Homooligomer (Potential). Rep binds to repeated DNA motifs (iterons). Mg(2+) serves as cofactor. Mn(2+) is required as a cofactor.

The protein resides in the host nucleus. It carries out the reaction ATP + H2O = ADP + phosphate + H(+). In terms of biological role, initiates and terminates the replication only of its own subviral DNA molecule. The closed circular ssDNA genome is first converted to a superhelical dsDNA. Rep binds a specific hairpin at the genome origin of replication. Introduces an endonucleolytic nick within the intergenic region of the genome, thereby initiating the rolling circle replication (RCR). Following cleavage, binds covalently to the 5'-phosphate of DNA as a tyrosyl ester. The cleavage gives rise to a free 3'-OH that serves as a primer for the cellular DNA polymerase. The polymerase synthesizes the (+) strand DNA by rolling circle mechanism. After one round of replication, a Rep-catalyzed nucleotidyl transfer reaction releases a circular single-stranded virus genome, thereby terminating the replication. Displays origin-specific DNA cleavage, nucleotidyl transferase, ATPase and helicase activities. The chain is Para-Rep C2 (C2) from Subterranean clover stunt C2 alphasatellite (SCSC2A).